Here is a 491-residue protein sequence, read N- to C-terminus: MANLTGNVYIDGLWLPGHGAPFESVQPVTGETVWDGNAASLEDVDAAVREARKAFLAWRRKSLAERQAVIEAFGELLEANKEELAHQIGLETGKPLWESRTEVAAMMGKIPISVKAYNERTGHTESDVAGGHAVLRHRPHGVVAVFGPYNFPGHLPNGHIVPALLAGNTVVFKPSELTPGVAELTVRLWEKAGLPDGVINLVQGGSDTGKCLARHSLIDGLFFTGSSTVGHLLHEQFGGQPEKILALEMGGNNPLIVQNVSDLDGAVHHALQSAFLSAGQRCTCARRLLVPKGKKGDEFLARLVEVAARITVAEFDADPQPFMGSVISAEAANQLLKAQAAMLEKGATSLLEMKQLKPDTGLLSPGIVDATGIELEDQEFFGPLLTVYRYKGFDEALELANNTRYGLSAGILSDDRKLYNRLVEEVRAGIVNWNRPLTGASSAAPFGGVGASGNHRPSAYYAADYCAWPMASLEAGKSELPDSLAPGLNFD.

225–230 (GSSTVG) is an NAD(+) binding site. Catalysis depends on residues glutamate 248 and cysteine 282.

The protein belongs to the aldehyde dehydrogenase family. AstD subfamily.

The enzyme catalyses N-succinyl-L-glutamate 5-semialdehyde + NAD(+) + H2O = N-succinyl-L-glutamate + NADH + 2 H(+). The protein operates within amino-acid degradation; L-arginine degradation via AST pathway; L-glutamate and succinate from L-arginine: step 4/5. Its function is as follows. Catalyzes the NAD-dependent reduction of succinylglutamate semialdehyde into succinylglutamate. In Marinobacter nauticus (strain ATCC 700491 / DSM 11845 / VT8) (Marinobacter aquaeolei), this protein is N-succinylglutamate 5-semialdehyde dehydrogenase.